The chain runs to 540 residues: Chaperonin GroEL (540 aa).

Residues 30–33, 87–91, Gly-414, 479–481, and Asp-495 each bind ATP; these read TLGP, DGTTT, and NAL.

The protein belongs to the chaperonin (HSP60) family. In terms of assembly, forms a cylinder of 14 subunits composed of two heptameric rings stacked back-to-back. Interacts with the co-chaperonin GroES.

It is found in the cytoplasm. The catalysed reaction is ATP + H2O + a folded polypeptide = ADP + phosphate + an unfolded polypeptide.. Functionally, together with its co-chaperonin GroES, plays an essential role in assisting protein folding. The GroEL-GroES system forms a nano-cage that allows encapsulation of the non-native substrate proteins and provides a physical environment optimized to promote and accelerate protein folding. This Carboxydothermus hydrogenoformans (strain ATCC BAA-161 / DSM 6008 / Z-2901) protein is Chaperonin GroEL.